The chain runs to 753 residues: Centromere protein I (753 aa).

A compositionally biased stretch (basic residues) spans 1-15 (MQRRQSSKHSKRPLQ). The interval 1-54 (MQRRQSSKHSKRPLQVHHSNQTDLSAWRKGGTVDTEKSAQNRQSLSDQKNDNEQ) is disordered.

Belongs to the CENP-I/CTF3 family. Component of the CENPA-HI complex, at least composed of CENPH, CENPI, CENPK, CENPL, CENPM, CENPO and CENPP.

It is found in the nucleus. The protein resides in the chromosome. The protein localises to the centromere. Component of the CENPA-HI complex, a centromeric complex involved in assembly of kinetochore proteins, mitotic progression and chromosome segregation. Required for the localization of CENPC but not CENPA to the centromere. It however may be involved in incorporation of newly synthesized CENPA into centromeres via its interaction with the CENPA-NAC complex. The protein is Centromere protein I (CENPI) of Gallus gallus (Chicken).